Reading from the N-terminus, the 147-residue chain is FAD synthase (147 aa).

ATP contacts are provided by residues 13 to 14 (TF), 18 to 21 (HEGH), Asp100, and Phe127.

It belongs to the archaeal FAD synthase family. In terms of assembly, homodimer. A divalent metal cation is required as a cofactor.

The catalysed reaction is FMN + ATP + H(+) = FAD + diphosphate. The protein operates within cofactor biosynthesis; FAD biosynthesis; FAD from FMN: step 1/1. Functionally, catalyzes the transfer of the AMP portion of ATP to flavin mononucleotide (FMN) to produce flavin adenine dinucleotide (FAD) coenzyme. This is FAD synthase from Korarchaeum cryptofilum (strain OPF8).